The sequence spans 122 residues: Small ribosomal subunit protein bS6 (122 aa).

The interval 99–122 is disordered; it reads PSPMMKEVAREEAKKAAAQTEQAA.

The protein belongs to the bacterial ribosomal protein bS6 family.

Its function is as follows. Binds together with bS18 to 16S ribosomal RNA. This is Small ribosomal subunit protein bS6 from Ralstonia pickettii (strain 12J).